The following is a 64-amino-acid chain: MHCLPVLVILLLLIASTPSVDARPKTKDDVPLASFHGADNANRILRTLWNLRGCCEDKTCCFIG.

The first 22 residues, Met1–Ala22, serve as a signal peptide directing secretion. A propeptide spanning residues Arg23 to Leu51 is cleaved from the precursor. At Ile63 the chain carries Isoleucine amide.

It belongs to the conotoxin T superfamily. In terms of processing, contains 2 disulfide bonds that can be either 'C1-C3, C2-C4' or 'C1-C4, C2-C3', since these disulfide connectivities have been observed for conotoxins with cysteine framework V (for examples, see AC P0DQQ7 and AC P81755). In terms of tissue distribution, expressed by the venom duct.

It localises to the secreted. The chain is Conotoxin Ts-011 from Conus tessulatus (Tessellate cone).